Here is a 279-residue protein sequence, read N- to C-terminus: Threonylcarbamoyl-AMP synthase (279 aa).

The N-terminal 55 residues, 1-55 (MSPARRCRGMRAAVAASVGLSEGPAGSRSGRLFRPPSPAPAAPGARLLRLPGSGA), are a transit peptide targeting the mitochondrion. Residues 21–41 (SEGPAGSRSGRLFRPPSPAPA) are disordered. The residue at position 60 (serine 60) is a Phosphoserine. Residues 67–257 (TEALRAAVAE…KFGIIRPGCA (191 aa)) enclose the YrdC-like domain.

This sequence belongs to the SUA5 family. As to quaternary structure, interacts with RSC1A1. As to expression, ubiquitously expressed.

It is found in the cytoplasm. The protein localises to the mitochondrion. Its subcellular location is the cell membrane. It catalyses the reaction L-threonine + hydrogencarbonate + ATP = L-threonylcarbamoyladenylate + diphosphate + H2O. Its function is as follows. Cytoplasmic and mitochondrial threonylcarbamoyl-AMP synthase required for the formation of a threonylcarbamoyl group on adenosine at position 37 (t(6)A37) in tRNAs that read codons beginning with adenine. Catalyzes the conversion of L-threonine, HCO(3)(-)/CO(2) and ATP to give threonylcarbamoyl-AMP (TC-AMP) as the acyladenylate intermediate, with the release of diphosphate. Participates in t(6)A37 formation in cytoplasmic and mitochondrial tRNAs. May regulate the activity of some transporters. The protein is Threonylcarbamoyl-AMP synthase of Homo sapiens (Human).